We begin with the raw amino-acid sequence, 215 residues long: Guanylate kinase (215 aa).

Residues 11-189 (GNVFMVVAPS…ALTELVQIIS (179 aa)) enclose the Guanylate kinase-like domain. 18-25 (APSGAGKS) is a binding site for ATP.

Belongs to the guanylate kinase family.

Its subcellular location is the cytoplasm. It catalyses the reaction GMP + ATP = GDP + ADP. In terms of biological role, essential for recycling GMP and indirectly, cGMP. The sequence is that of Guanylate kinase from Bordetella bronchiseptica (strain ATCC BAA-588 / NCTC 13252 / RB50) (Alcaligenes bronchisepticus).